Consider the following 341-residue polypeptide: Guanine nucleotide-binding protein subunit beta (341 aa).

WD repeat units follow at residues 54 to 84 (GHLA…IVWD), 96 to 126 (LRSS…SIYS), 142 to 171 (GHTG…ALWD), 183 to 213 (GHTG…KLWD), 225 to 255 (GHES…RLFD), 269 to 299 (NIIC…NVWD), and 311 to 341 (GHDN…KIWN).

It belongs to the WD repeat G protein beta family. G proteins are composed of 3 units, alpha, beta and gamma.

Guanine nucleotide-binding proteins (G proteins) are involved as a modulator or transducer in various transmembrane signaling systems. The beta and gamma chains are required for the GTPase activity, for replacement of GDP by GTP, and for G protein-effector interaction. In Lymnaea stagnalis (Great pond snail), this protein is Guanine nucleotide-binding protein subunit beta.